Reading from the N-terminus, the 405-residue chain is Probable tRNA sulfurtransferase (405 aa).

The 106-residue stretch at 60–165 folds into the THUMP domain; the sequence is EGVIERLRHV…QDAIYLTNQV (106 aa). ATP contacts are provided by residues 183 to 184, 208 to 209, R265, G287, and Q296; these read ML and HF.

This sequence belongs to the ThiI family.

The protein resides in the cytoplasm. It catalyses the reaction [ThiI sulfur-carrier protein]-S-sulfanyl-L-cysteine + a uridine in tRNA + 2 reduced [2Fe-2S]-[ferredoxin] + ATP + H(+) = [ThiI sulfur-carrier protein]-L-cysteine + a 4-thiouridine in tRNA + 2 oxidized [2Fe-2S]-[ferredoxin] + AMP + diphosphate. The catalysed reaction is [ThiS sulfur-carrier protein]-C-terminal Gly-Gly-AMP + S-sulfanyl-L-cysteinyl-[cysteine desulfurase] + AH2 = [ThiS sulfur-carrier protein]-C-terminal-Gly-aminoethanethioate + L-cysteinyl-[cysteine desulfurase] + A + AMP + 2 H(+). It participates in cofactor biosynthesis; thiamine diphosphate biosynthesis. Its function is as follows. Catalyzes the ATP-dependent transfer of a sulfur to tRNA to produce 4-thiouridine in position 8 of tRNAs, which functions as a near-UV photosensor. Also catalyzes the transfer of sulfur to the sulfur carrier protein ThiS, forming ThiS-thiocarboxylate. This is a step in the synthesis of thiazole, in the thiamine biosynthesis pathway. The sulfur is donated as persulfide by IscS. The sequence is that of Probable tRNA sulfurtransferase from Latilactobacillus sakei subsp. sakei (strain 23K) (Lactobacillus sakei subsp. sakei).